A 191-amino-acid polypeptide reads, in one-letter code: Fe/S biogenesis protein NfuA (191 aa).

[4Fe-4S] cluster-binding residues include Cys-149 and Cys-152.

Belongs to the NfuA family. In terms of assembly, homodimer. [4Fe-4S] cluster is required as a cofactor.

Involved in iron-sulfur cluster biogenesis. Binds a 4Fe-4S cluster, can transfer this cluster to apoproteins, and thereby intervenes in the maturation of Fe/S proteins. Could also act as a scaffold/chaperone for damaged Fe/S proteins. This Serratia proteamaculans (strain 568) protein is Fe/S biogenesis protein NfuA.